A 205-amino-acid chain; its full sequence is Glycerol-3-phosphate acyltransferase (205 aa).

5 helical membrane-spanning segments follow: residues Ile4 to Val24, Pro80 to Phe100, Gly107 to Ala127, Trp130 to Ile150, and Val155 to Leu175.

This sequence belongs to the PlsY family. In terms of assembly, probably interacts with PlsX.

It is found in the cell inner membrane. The catalysed reaction is an acyl phosphate + sn-glycerol 3-phosphate = a 1-acyl-sn-glycero-3-phosphate + phosphate. It functions in the pathway lipid metabolism; phospholipid metabolism. Its function is as follows. Catalyzes the transfer of an acyl group from acyl-phosphate (acyl-PO(4)) to glycerol-3-phosphate (G3P) to form lysophosphatidic acid (LPA). This enzyme utilizes acyl-phosphate as fatty acyl donor, but not acyl-CoA or acyl-ACP. The polypeptide is Glycerol-3-phosphate acyltransferase (Klebsiella pneumoniae (strain 342)).